A 215-amino-acid chain; its full sequence is NAD(P)H-hydrate epimerase (215 aa).

Positions 10–211 constitute a YjeF N-terminal domain; that stretch reads AQRYDAHATN…DIGIYAQDRV (202 aa). 58 to 62 lines the (6S)-NADPHX pocket; sequence NNGGD. K(+) contacts are provided by N59 and D121. (6S)-NADPHX-binding positions include 125–131 and D154; that span reads GVGLTRD. S157 is a K(+) binding site.

It belongs to the NnrE/AIBP family. It depends on K(+) as a cofactor.

It catalyses the reaction (6R)-NADHX = (6S)-NADHX. It carries out the reaction (6R)-NADPHX = (6S)-NADPHX. Functionally, catalyzes the epimerization of the S- and R-forms of NAD(P)HX, a damaged form of NAD(P)H that is a result of enzymatic or heat-dependent hydration. This is a prerequisite for the S-specific NAD(P)H-hydrate dehydratase to allow the repair of both epimers of NAD(P)HX. The polypeptide is NAD(P)H-hydrate epimerase (Levilactobacillus brevis (strain ATCC 367 / BCRC 12310 / CIP 105137 / JCM 1170 / LMG 11437 / NCIMB 947 / NCTC 947) (Lactobacillus brevis)).